An 81-amino-acid chain; its full sequence is Small ribosomal subunit protein bS16 (81 aa).

It belongs to the bacterial ribosomal protein bS16 family.

This Phytoplasma mali (strain AT) protein is Small ribosomal subunit protein bS16.